Reading from the N-terminus, the 182-residue chain is Putative manganese efflux pump MntP (182 aa).

The next 6 helical transmembrane spans lie at 7-27, 38-58, 71-91, 106-126, 131-151, and 159-179; these read IISIILLAIGLSMDGFSVSLG, IAYIGLTIGFLHMLMPLAGML, TSFAGGVLLFLIGAHMFFSAF, LWIIAFSVSLDSFTVGLGLGI, IFVTLFAFGIVSCFLTWLGML, and FLGVYSELLGGSILCGFGIFI.

Belongs to the MntP (TC 9.B.29) family.

The protein resides in the cell membrane. In terms of biological role, probably functions as a manganese efflux pump. The sequence is that of Putative manganese efflux pump MntP from Oceanobacillus iheyensis (strain DSM 14371 / CIP 107618 / JCM 11309 / KCTC 3954 / HTE831).